The sequence spans 603 residues: Glutamyl-tRNA(Gln) amidotransferase subunit B, mitochondrial (603 aa).

The transit peptide at 1-32 (MIRHRLRLALSAAPVTATGRRTRSKTAPRRSL) directs the protein to the mitochondrion. The segment at 12–59 (AAPVTATGRRTRSKTAPRRSLSTQQTQSSASSSSNNLDGDGRAFVPLR) is disordered. Residues 31–48 (SLSTQQTQSSASSSSNNL) show a composition bias toward low complexity.

The protein belongs to the GatB/GatE family. GatB subfamily. Subunit of the heterotrimeric GatCAB amidotransferase (AdT) complex, composed of A, B and C subunits.

The protein resides in the mitochondrion. The catalysed reaction is L-glutamyl-tRNA(Gln) + L-glutamine + ATP + H2O = L-glutaminyl-tRNA(Gln) + L-glutamate + ADP + phosphate + H(+). Functionally, allows the formation of correctly charged Gln-tRNA(Gln) through the transamidation of misacylated Glu-tRNA(Gln) in the mitochondria. The reaction takes place in the presence of glutamine and ATP through an activated gamma-phospho-Glu-tRNA(Gln). The chain is Glutamyl-tRNA(Gln) amidotransferase subunit B, mitochondrial from Arthroderma otae (strain ATCC MYA-4605 / CBS 113480) (Microsporum canis).